Reading from the N-terminus, the 621-residue chain is Chaperone protein HscA homolog (621 aa).

The protein belongs to the heat shock protein 70 family.

In terms of biological role, chaperone involved in the maturation of iron-sulfur cluster-containing proteins. Has a low intrinsic ATPase activity which is markedly stimulated by HscB. This chain is Chaperone protein HscA homolog, found in Cupriavidus metallidurans (strain ATCC 43123 / DSM 2839 / NBRC 102507 / CH34) (Ralstonia metallidurans).